The following is a 240-amino-acid chain: Uridylate kinase (240 aa).

ATP contacts are provided by residues 15 to 18, Gly-58, and Arg-62; that span reads KISG. Residues Asp-77 and 138–145 contribute to the UMP site; that span reads TGNPLFTT. 3 residues coordinate ATP: Thr-165, Tyr-171, and Asp-174.

The protein belongs to the UMP kinase family. As to quaternary structure, homohexamer.

It is found in the cytoplasm. It carries out the reaction UMP + ATP = UDP + ADP. It functions in the pathway pyrimidine metabolism; CTP biosynthesis via de novo pathway; UDP from UMP (UMPK route): step 1/1. Its activity is regulated as follows. Inhibited by UTP. Its function is as follows. Catalyzes the reversible phosphorylation of UMP to UDP. The protein is Uridylate kinase of Buchnera aphidicola subsp. Schizaphis graminum (strain Sg).